The sequence spans 758 residues: Transmembrane E3 ubiquitin-protein ligase 1 (758 aa).

The N-terminal stretch at 1 to 26 (MEIDGNTLVFIIVILFLFFSSPGGDG) is a signal peptide. The Lumenal segment spans residues 27–398 (VSSQYEFNQL…YELKIMSIRK (372 aa)). The helical transmembrane segment at 399-419 (HLLFGIALFAAQIYLLLTQMH) threads the bilayer. Topologically, residues 420-431 (HTNTPSMVNKIS) are cytoplasmic. A helical transmembrane segment spans residues 432 to 452 (FYCFSMINLVDGSLATLYFVA). The Lumenal portion of the chain corresponds to 453-458 (ASVVPE). Residues 459 to 479 (LYLPLVISAFSCFILASIFEI) form a helical membrane-spanning segment. Residues 480–523 (RYLISIYASQVNEQNVGIINLLRGNTGTYDENRPRPAFIPDEGS) lie on the Cytoplasmic side of the membrane. Residues 524 to 544 (IGGSLYGRFFFMLIIFTFLIL) form a helical membrane-spanning segment. The Lumenal segment spans residues 545 to 553 (SSTSWPRQL). Residues 554 to 574 (RMVFEYILIFILNSYWIPQIF) form a helical membrane-spanning segment. The Cytoplasmic segment spans residues 575-602 (RNAVKGIPSRRERARSSIGGNRSQNKMP). Residues 603–623 (LLWSFVIGTTIIRSLPVVYVF) traverse the membrane as a helical segment. Over 624 to 635 (TYSSNVFRHHKD) the chain is Lumenal. Residues 636–656 (VHFVVFLSLWLLFQISILYSQ) form a helical membrane-spanning segment. Residues 657-758 (DVLGSRWFLP…PVCRSPLPPL (102 aa)) lie on the Cytoplasmic side of the membrane. Residues 699 to 752 (CAICMSDVPIYIEEIPETHKVDQHSYMVTPCNHVFHTSCLENWMNYKLQCPVCR) form an RING-type; atypical zinc finger.

In terms of assembly, component of the DSC E3 ligase complexes composed of at least TUL1, DSC2, DSC3, UBX3, CDC48 as well as VLD1 for the vacuole-localized complex or GLD1 for the Golgi/endosome-localized complex. Interacts with UBC4.

It is found in the golgi apparatus membrane. It carries out the reaction S-ubiquitinyl-[E2 ubiquitin-conjugating enzyme]-L-cysteine + [acceptor protein]-L-lysine = [E2 ubiquitin-conjugating enzyme]-L-cysteine + N(6)-ubiquitinyl-[acceptor protein]-L-lysine.. Its pathway is protein modification; protein ubiquitination. Functionally, catalytic component of the DSC E3 ubiquitin ligase complexes that tag proteins present in Golgi, endosome and vacuole membranes and function in protein homeostasis under non-stress conditions and support a role in protein quality control. Mediates ubiquitination of vacuolar proteins such as CPS1, PPN1, PEP12 and other proteins containing exposed hydrophilic residues within their transmembrane domains, leading to their sorting into internal vesicles in late endosomes. Targets also the unpalmitoylated endosomal SNARE TLG1 to the MVB pathway. The protein is Transmembrane E3 ubiquitin-protein ligase 1 (TUL1) of Saccharomyces cerevisiae (strain ATCC 204508 / S288c) (Baker's yeast).